Consider the following 144-residue polypeptide: Prefoldin subunit alpha (144 aa).

The protein belongs to the prefoldin alpha subunit family. As to quaternary structure, heterohexamer of two alpha and four beta subunits.

Its subcellular location is the cytoplasm. Molecular chaperone capable of stabilizing a range of proteins. Seems to fulfill an ATP-independent, HSP70-like function in archaeal de novo protein folding. In Metallosphaera sedula (strain ATCC 51363 / DSM 5348 / JCM 9185 / NBRC 15509 / TH2), this protein is Prefoldin subunit alpha.